The following is a 236-amino-acid chain: MAGADVDVGTELRLGLPGGGGGAAEAAAKAAKRGFEETIDLKLKLPTAGMEEAAAGKAEAPAAEKAKRPAEAAAADAEKPPAPKAQAVGWPPVRSFRRNIMTVQSVKSKKEEEADKQQQQPAANASGSNSSAFVKVSMDGAPYLRKVDLKMYNSYKDLSLALQKMFGTFTATGNNMNEVNGSDAVTTYEDKDGDWMLVGDVPWQMFVESCKRLRIMKGSEAIGLAPRAKDKYKNKS.

3 disordered regions span residues 1-24 (MAGA…GGAA), 52-93 (EAAA…WPPV), and 105-130 (SVKS…GSNS). Positions 12–16 (LRLGL) match the EAR-like (transcriptional repression) motif. Over residues 52 to 61 (EAAAGKAEAP) the composition is skewed to low complexity. Over residues 62-81 (AAEKAKRPAEAAAADAEKPP) the composition is skewed to basic and acidic residues. Positions 117-130 (QQQQPAANASGSNS) are enriched in low complexity. The PB1 domain maps to 131–218 (SAFVKVSMDG…SCKRLRIMKG (88 aa)).

Belongs to the Aux/IAA family. As to quaternary structure, homodimers and heterodimers.

The protein localises to the nucleus. Functionally, aux/IAA proteins are short-lived transcriptional factors that function as repressors of early auxin response genes at low auxin concentrations. This Oryza sativa subsp. japonica (Rice) protein is Auxin-responsive protein IAA13 (IAA13).